The chain runs to 382 residues: Exostosin-1 homolog (382 aa).

Positions 1 to 20 (MQNVMKFHLVIFMLFGSVRL) are cleaved as a signal peptide. A glycan (N-linked (GlcNAc...) asparagine) is linked at asparagine 268.

The protein belongs to the glycosyltransferase 47 family. As to quaternary structure, interacts with rib-2.

It is found in the endoplasmic reticulum. Its subcellular location is the golgi apparatus. Functionally, required for the biosynthesis of heparan sulfate by positively regulating N-acetylglucosamine transferase II (GlcNAcT-II) and glucuronyl transferase II (GlcAT-II) activities of glycosyltransferase rib-2. Probably not directly involved in chondroitin sulfate biosynthesis but negatively regulates chondroitin sulfate levels. Maternally required for normal ventral epidermal enclosure and for embryo elongation during the early stages of embryonic development. In addition, involved in the elongation of the pharyngeal isthmus and in the organization of the actin cytoskeleton in the pharyngeal muscles during the later stages embryonic development. In adults, regulates egg-laying and the normal morphogenesis of the vulva. Also involved in the directed migration of hermaphrodite-specific neurons. This Caenorhabditis elegans protein is Exostosin-1 homolog (rib-1).